Reading from the N-terminus, the 228-residue chain is Urease accessory protein UreF (228 aa).

Belongs to the UreF family. In terms of assembly, ureD, UreF and UreG form a complex that acts as a GTP-hydrolysis-dependent molecular chaperone, activating the urease apoprotein by helping to assemble the nickel containing metallocenter of UreC. The UreE protein probably delivers the nickel.

Its subcellular location is the cytoplasm. Functionally, required for maturation of urease via the functional incorporation of the urease nickel metallocenter. This chain is Urease accessory protein UreF, found in Yersinia pestis bv. Antiqua (strain Antiqua).